A 303-amino-acid chain; its full sequence is Acetylglutamate kinase (303 aa).

Residues 73–74 (GG), arginine 95, and asparagine 194 each bind substrate.

This sequence belongs to the acetylglutamate kinase family. ArgB subfamily.

The protein localises to the cytoplasm. It catalyses the reaction N-acetyl-L-glutamate + ATP = N-acetyl-L-glutamyl 5-phosphate + ADP. The protein operates within amino-acid biosynthesis; L-arginine biosynthesis; N(2)-acetyl-L-ornithine from L-glutamate: step 2/4. Catalyzes the ATP-dependent phosphorylation of N-acetyl-L-glutamate. This Saccharopolyspora erythraea (strain ATCC 11635 / DSM 40517 / JCM 4748 / NBRC 13426 / NCIMB 8594 / NRRL 2338) protein is Acetylglutamate kinase.